We begin with the raw amino-acid sequence, 34 residues long: Antimicrobial peptide Alo-1 (34 aa).

Intrachain disulfides connect cysteine 1-cysteine 18, cysteine 8-cysteine 22, and cysteine 17-cysteine 33.

The protein resides in the secreted. In terms of biological role, has antifungal activity against C.glabrata. This chain is Antimicrobial peptide Alo-1, found in Acrocinus longimanus (Giant harlequin beetle).